A 255-amino-acid polypeptide reads, in one-letter code: tRNA (guanine-N(7)-)-methyltransferase (255 aa).

Positions 1–35 (MTRTNDASGGGKLPRKRFYRARAHSNPLSDSHFPV) are disordered. Residues 13-23 (LPRKRFYRARA) are compositionally biased toward basic residues. S-adenosyl-L-methionine contacts are provided by residues Gly-75, 98 to 99 (EL), 131 to 132 (NS), and Leu-151. Asp-154 is an active-site residue. An S-adenosyl-L-methionine-binding site is contributed by 229–231 (TEE).

This sequence belongs to the class I-like SAM-binding methyltransferase superfamily. TrmB family.

Its subcellular location is the nucleus. It catalyses the reaction guanosine(46) in tRNA + S-adenosyl-L-methionine = N(7)-methylguanosine(46) in tRNA + S-adenosyl-L-homocysteine. Its pathway is tRNA modification; N(7)-methylguanine-tRNA biosynthesis. Functionally, catalyzes the formation of N(7)-methylguanine at position 46 (m7G46) in tRNA. The protein is tRNA (guanine-N(7)-)-methyltransferase of Zea mays (Maize).